The following is a 747-amino-acid chain: NAD(P)H-quinone oxidoreductase subunit 5, chloroplastic (747 aa).

16 helical membrane-spanning segments follow: residues 8–28 (AWII…ELLL), 39–59 (IWAF…TKLA), 89–109 (IDPL…MVLI), 125–145 (FAYM…PNLI), 147–167 (IHIF…FWFT), 185–205 (GDFG…SFEF), 231–251 (AFLL…HVWL), 259–279 (TPIS…FLVA), 281–301 (LLPL…IGVI), 328–348 (LGYM…FHLI), 355–375 (ALLF…VGYS), 397–417 (TTFF…CFWS), 426–446 (WLYS…TAFY), 550–570 (LFPL…GIHF), 608–628 (FYSV…YGSV), and 726–746 (LFLY…YNFL).

The protein belongs to the complex I subunit 5 family. In terms of assembly, NDH is composed of at least 16 different subunits, 5 of which are encoded in the nucleus.

It localises to the plastid. It is found in the chloroplast thylakoid membrane. It carries out the reaction a plastoquinone + NADH + (n+1) H(+)(in) = a plastoquinol + NAD(+) + n H(+)(out). It catalyses the reaction a plastoquinone + NADPH + (n+1) H(+)(in) = a plastoquinol + NADP(+) + n H(+)(out). Functionally, NDH shuttles electrons from NAD(P)H:plastoquinone, via FMN and iron-sulfur (Fe-S) centers, to quinones in the photosynthetic chain and possibly in a chloroplast respiratory chain. The immediate electron acceptor for the enzyme in this species is believed to be plastoquinone. Couples the redox reaction to proton translocation, and thus conserves the redox energy in a proton gradient. This chain is NAD(P)H-quinone oxidoreductase subunit 5, chloroplastic (ndhF), found in Nymphaea alba (White water-lily).